Reading from the N-terminus, the 482-residue chain is UDP-N-acetylmuramate--L-alanine ligase (482 aa).

129 to 135 serves as a coordination point for ATP; it reads GTHGKTT.

This sequence belongs to the MurCDEF family.

The protein localises to the cytoplasm. The catalysed reaction is UDP-N-acetyl-alpha-D-muramate + L-alanine + ATP = UDP-N-acetyl-alpha-D-muramoyl-L-alanine + ADP + phosphate + H(+). It participates in cell wall biogenesis; peptidoglycan biosynthesis. Its function is as follows. Cell wall formation. This Acinetobacter baumannii (strain AB307-0294) protein is UDP-N-acetylmuramate--L-alanine ligase.